Reading from the N-terminus, the 275-residue chain is MTSAGVFNAGSDERANSRDEEYPCSSEVSPSTESSCSNFINIKVGLLEQFLLYKFKMKQRILKEDMLKIVNPRYQNQFAEIHRRASEHIEVVFAVDLKEVNPTCHLYDLVSKLKLPNNGRIHVGKVLPKTGLLMTFLVVIFLKGNCANKEDTWKFLDMMQIYDGKKYYIYGEPRKLITQDFVRLTYLEYHQVPCSYPAHYQFLWGPRAYTETSKMKVLEYLAKVNDIAPGAFSSQYEEALQDEEESPSQRCSRNWHYCSGQDCLRAKFSSFSQPY.

Residues 1-33 (MTSAGVFNAGSDERANSRDEEYPCSSEVSPSTE) are disordered. The segment covering 11 to 21 (SDERANSRDEE) has biased composition (basic and acidic residues). The span at 23–33 (PCSSEVSPSTE) shows a compositional bias: low complexity. Residues 40–239 (INIKVGLLEQ…GAFSSQYEEA (200 aa)) enclose the MAGE domain.

Expressed in testis. Not expressed in other normal tissues, but is expressed in tumors of different histological origins.

The chain is Melanoma-associated antigen B5 (MAGEB5) from Homo sapiens (Human).